The following is a 226-amino-acid chain: Histone H1.5 (226 aa).

Residues 1–16 show a composition bias toward low complexity; the sequence is MSETAPAETATPAPVE. The tract at residues 1-44 is disordered; the sequence is MSETAPAETATPAPVEKSPAKKKATKKAAGAGAAKRKATGPPVS. Ser2 is subject to N-acetylserine; partial. A Phosphoserine modification is found at Ser2. A Phosphothreonine; by GSK3 modification is found at Thr11. Lys17 bears the N6-acetyllysine mark. Ser18 carries the phosphoserine modification. An N6-methyllysine modification is found at Lys27. At Lys37 the chain carries N6-(beta-hydroxybutyryl)lysine; alternate. At Lys37 the chain carries N6-succinyllysine; alternate. The residue at position 39 (Thr39) is a Phosphothreonine. Positions 39–112 constitute an H15 domain; the sequence is TGPPVSELIT…GASGSFKLNK (74 aa). At Lys49 the chain carries N6-acetyllysine. N6-(beta-hydroxybutyryl)lysine is present on Lys55. At Arg57 the chain carries Citrulline. Lys67 bears the N6-(beta-hydroxybutyryl)lysine mark. N6-acetyllysine is present on Lys78. N6-(beta-hydroxybutyryl)lysine is present on residues Lys88, Lys93, and Lys109. The segment at 98–226 is disordered; the sequence is QTKGTGASGS…KAKKAAAKKK (129 aa). Over residues 122 to 133 the composition is skewed to basic residues; sequence KAKKAGAAKAKK. Phosphothreonine is present on residues Thr138 and Thr155. Over residues 140–161 the composition is skewed to basic residues; sequence KKAKKAAGAKKAVKKTPKKAKK. At Lys168 the chain carries N6-acetyllysine. The span at 169 to 187 shows a compositional bias: basic residues; it reads KVAKSPKKAKAAAKPKKAT. 2 positions are modified to phosphoserine: Ser173 and Ser189. A compositionally biased stretch (basic residues) spans 194–226; the sequence is KAVKPKAAKPKAAKPKAAKPKAAKAKKAAAKKK.

This sequence belongs to the histone H1/H5 family. Interacts with MSX1. In terms of processing, H1 histones are progressively phosphorylated during the cell cycle, becoming maximally phosphorylated during late G2 phase and M phase, and being dephosphorylated sharply thereafter. Phosphorylated at Thr-11 by GSK3B during mitosis in prometaphase and dephosphorylated in telophase. Citrullination at Arg-57 (H1R54ci) by PADI4 takes place within the DNA-binding site of H1 and results in its displacement from chromatin and global chromatin decondensation, thereby promoting pluripotency and stem cell maintenance. As to expression, ubiquitous. Expressed in the majority of the cell lines tested and in testis.

The protein localises to the nucleus. The protein resides in the chromosome. Its function is as follows. Histone H1 protein binds to linker DNA between nucleosomes forming the macromolecular structure known as the chromatin fiber. Histones H1 are necessary for the condensation of nucleosome chains into higher-order structured fibers. Also acts as a regulator of individual gene transcription through chromatin remodeling, nucleosome spacing and DNA methylation. In Homo sapiens (Human), this protein is Histone H1.5.